We begin with the raw amino-acid sequence, 98 residues long: MMCGAPSATMPATAETQEVADQVKSQLESKENQKFDVFKAISFKRQIVAGTNLFIKVDVGGDKCVHLRVFQPLPHENKPLTLSSYQTNKERHDELSYF.

Met1 bears the N-acetylmethionine mark. Residues Gln46–Gly50 carry the Secondary area of contact motif.

The protein belongs to the cystatin family. In terms of tissue distribution, widely expressed. Highest expression in heart, liver and kidney. Lower levels in brain, lung and skeletal muscle. Lowest levels in spleen and testis.

Its subcellular location is the cytoplasm. Functionally, this is an intracellular thiol proteinase inhibitor. In Mus musculus (Mouse), this protein is Cystatin-B (Cstb).